The following is a 197-amino-acid chain: Putative RNA polymerase II subunit B1 CTD phosphatase rtr1 (197 aa).

The RTR1-type zinc-finger motif lies at 60–139 (EARKYLRKSD…LSDEPLWIRE (80 aa)). Zn(2+)-binding residues include C83, C88, C115, and C119.

Belongs to the RPAP2 family.

The protein localises to the cytoplasm. Its subcellular location is the nucleus. The catalysed reaction is O-phospho-L-seryl-[protein] + H2O = L-seryl-[protein] + phosphate. It catalyses the reaction O-phospho-L-threonyl-[protein] + H2O = L-threonyl-[protein] + phosphate. Putative RNA polymerase II subunit B1 C-terminal domain (CTD) phosphatase involved in RNA polymerase II transcription regulation. In Schizosaccharomyces pombe (strain 972 / ATCC 24843) (Fission yeast), this protein is Putative RNA polymerase II subunit B1 CTD phosphatase rtr1.